The chain runs to 503 residues: MSEQQNTELDFHGEMAVRREKLAALRAKGNAFPNTFRRDALAQDLHHQYDETDGEQLKEKNPQVAVAGRIMTRRAMGKATFITIQDMSGKIQLYVACDNLPEGVYAEDVKSWDLGDIVGIKGTLFKTKTNELTVKAHEVQLLTKALRPLPDKFHGLSDQETRYRQRYLDLISNEESRRTFVIRSKVIAGIREYFIGKGFIEVETPMLQVIPGGAAARPFVTHHNALDIDMYLRIAPELYLKRLVVGGFERVFELNRNFRNEGVSVRHNPEFTMIEYYQAYADYHDLMDNTEELLRKLALDILGTTIVPYGEYEFDFGKPFERITMHDAVLKYGAEKGIVKEDLYDLERAKAAATKLGIEIQKSWGLGSVVNAIFEEVAEHHLIQPTFLTAHPAEISPLARRNDENPEVTDRFELFIGGREIGNGFSELNDAEDQAERFDAQVAAKDAGDDEAMFKDDDFVTALEHGLPPTAGEGLGIDRLAMLFANAPSIRDVILFPAMKHKA.

Residues glutamate 413 and glutamate 420 each contribute to the Mg(2+) site.

Belongs to the class-II aminoacyl-tRNA synthetase family. As to quaternary structure, homodimer. It depends on Mg(2+) as a cofactor.

It is found in the cytoplasm. It catalyses the reaction tRNA(Lys) + L-lysine + ATP = L-lysyl-tRNA(Lys) + AMP + diphosphate. The protein is Lysine--tRNA ligase of Actinobacillus succinogenes (strain ATCC 55618 / DSM 22257 / CCUG 43843 / 130Z).